We begin with the raw amino-acid sequence, 122 residues long: Small ribosomal subunit protein uS13 (122 aa).

The tract at residues 99-122 (RGQRTHTNARTRKGPAKAIAGKKK) is disordered.

It belongs to the universal ribosomal protein uS13 family. As to quaternary structure, part of the 30S ribosomal subunit. Forms a loose heterodimer with protein S19. Forms two bridges to the 50S subunit in the 70S ribosome.

Located at the top of the head of the 30S subunit, it contacts several helices of the 16S rRNA. In the 70S ribosome it contacts the 23S rRNA (bridge B1a) and protein L5 of the 50S subunit (bridge B1b), connecting the 2 subunits; these bridges are implicated in subunit movement. Contacts the tRNAs in the A and P-sites. This chain is Small ribosomal subunit protein uS13, found in Rhodopseudomonas palustris (strain BisA53).